We begin with the raw amino-acid sequence, 311 residues long: MFYTTVGKIIKELNLECLTEISGIEERKIKDMNLNRPALQLMGFFEYFDEQRVQIIGISEMAYLKTMTPSQRRDAIERLFQRNIPCVIITSNQEPFEEFLEFSKKYGVPLLRTQEVTTRFMTNLSTFLTHELAPRITRHGTLVNVYGEGVLMLGESGVGKSETALELVKRGHILVADDAVEIRKVSEKTLVGEAPEIIRHLIEIRGIGILDVKNLFGVGCVKESERIDLVIQLETWKQGKEYERLGLHDQYIEILGIKVPTLVIPVRPGRNLAIIVEVAAMNNRQKKMGYNAAKALTERLQKQMSRGNGAE.

Active-site residues include His-139 and Lys-160. Residue 154–161 (GESGVGKS) coordinates ATP. Residue Ser-161 coordinates Mg(2+). The active-site Proton acceptor; for phosphorylation activity. Proton donor; for dephosphorylation activity is the Asp-178. The important for the catalytic mechanism of both phosphorylation and dephosphorylation stretch occupies residues 202–211 (IEIRGIGILD). A Mg(2+)-binding site is contributed by Glu-203. Arg-244 is an active-site residue. Positions 265–270 (PVRPGR) are important for the catalytic mechanism of dephosphorylation.

This sequence belongs to the HPrK/P family. In terms of assembly, homohexamer. Requires Mg(2+) as cofactor.

The catalysed reaction is [HPr protein]-L-serine + ATP = [HPr protein]-O-phospho-L-serine + ADP + H(+). It catalyses the reaction [HPr protein]-O-phospho-L-serine + phosphate + H(+) = [HPr protein]-L-serine + diphosphate. Its function is as follows. Catalyzes the ATP- as well as the pyrophosphate-dependent phosphorylation of a specific serine residue in HPr, a phosphocarrier protein of the phosphoenolpyruvate-dependent sugar phosphotransferase system (PTS). HprK/P also catalyzes the pyrophosphate-producing, inorganic phosphate-dependent dephosphorylation (phosphorolysis) of seryl-phosphorylated HPr (P-Ser-HPr). The two antagonistic activities of HprK/P are regulated by several intracellular metabolites, which change their concentration in response to the absence or presence of rapidly metabolisable carbon sources (glucose, fructose, etc.) in the growth medium. Therefore, by controlling the phosphorylation state of HPr, HPrK/P is a sensor enzyme that plays a major role in the regulation of carbon metabolism and sugar transport: it mediates carbon catabolite repression (CCR), and regulates PTS-catalyzed carbohydrate uptake and inducer exclusion. This is HPr kinase/phosphorylase from Caldicellulosiruptor bescii (strain ATCC BAA-1888 / DSM 6725 / KCTC 15123 / Z-1320) (Anaerocellum thermophilum).